Consider the following 410-residue polypeptide: Protein CNPPD1 (410 aa).

Residues 233 to 253 (CLLAVAYVSSVALAVASVAVI) traverse the membrane as a helical segment.

This sequence belongs to the CNPPD1 family.

The protein resides in the membrane. This chain is Protein CNPPD1 (CNPPD1), found in Homo sapiens (Human).